The primary structure comprises 274 residues: 2,3,4,5-tetrahydropyridine-2,6-dicarboxylate N-succinyltransferase (274 aa).

Residues arginine 103 and aspartate 140 each contribute to the substrate site.

Belongs to the transferase hexapeptide repeat family. In terms of assembly, homotrimer.

Its subcellular location is the cytoplasm. The catalysed reaction is (S)-2,3,4,5-tetrahydrodipicolinate + succinyl-CoA + H2O = (S)-2-succinylamino-6-oxoheptanedioate + CoA. It functions in the pathway amino-acid biosynthesis; L-lysine biosynthesis via DAP pathway; LL-2,6-diaminopimelate from (S)-tetrahydrodipicolinate (succinylase route): step 1/3. The polypeptide is 2,3,4,5-tetrahydropyridine-2,6-dicarboxylate N-succinyltransferase (Actinobacillus pleuropneumoniae serotype 5b (strain L20)).